The sequence spans 201 residues: Dephospho-CoA kinase (201 aa).

Positions V4–K201 constitute a DPCK domain. ATP is bound at residue A12 to T17.

The protein belongs to the CoaE family.

Its subcellular location is the cytoplasm. It catalyses the reaction 3'-dephospho-CoA + ATP = ADP + CoA + H(+). Its pathway is cofactor biosynthesis; coenzyme A biosynthesis; CoA from (R)-pantothenate: step 5/5. Functionally, catalyzes the phosphorylation of the 3'-hydroxyl group of dephosphocoenzyme A to form coenzyme A. The protein is Dephospho-CoA kinase of Bacillus licheniformis (strain ATCC 14580 / DSM 13 / JCM 2505 / CCUG 7422 / NBRC 12200 / NCIMB 9375 / NCTC 10341 / NRRL NRS-1264 / Gibson 46).